Reading from the N-terminus, the 248-residue chain is ATP synthase subunit a, chloroplastic (248 aa).

5 helical membrane-spanning segments follow: residues 39–59, 96–116, 135–155, 200–220, and 221–241; these read QVLITSWVVIAILLGSSILAV, VPFIGTLFLFIFVSNWSGALF, INTTVALALLTSVAYFYAGLT, LVVVVLLSLVPLVVPIPVMFL, and GLFTSGIQALIFATLAAAYIG.

The protein belongs to the ATPase A chain family. In terms of assembly, F-type ATPases have 2 components, CF(1) - the catalytic core - and CF(0) - the membrane proton channel. CF(1) has five subunits: alpha(3), beta(3), gamma(1), delta(1), epsilon(1). CF(0) has four main subunits: a, b, b' and c.

It is found in the plastid. The protein resides in the chloroplast thylakoid membrane. Functionally, key component of the proton channel; it plays a direct role in the translocation of protons across the membrane. In Pelargonium hortorum (Common geranium), this protein is ATP synthase subunit a, chloroplastic.